Here is a 76-residue protein sequence, read N- to C-terminus: Sec-independent protein translocase protein TatA (76 aa).

Residues 1 to 21 form a helical membrane-spanning segment; it reads MGGLSIWHWLIVLLIVALVFG. Residues 43-76 form a disordered region; that stretch reads MKDGDAPADAQQLPRSGTVDVNAKEATRSDSNKA. Residues 64 to 76 are compositionally biased toward basic and acidic residues; that stretch reads NAKEATRSDSNKA.

This sequence belongs to the TatA/E family. In terms of assembly, the Tat system comprises two distinct complexes: a TatABC complex, containing multiple copies of TatA, TatB and TatC subunits, and a separate TatA complex, containing only TatA subunits. Substrates initially bind to the TatABC complex, which probably triggers association of the separate TatA complex to form the active translocon.

It localises to the cell inner membrane. Part of the twin-arginine translocation (Tat) system that transports large folded proteins containing a characteristic twin-arginine motif in their signal peptide across membranes. TatA could form the protein-conducting channel of the Tat system. This Burkholderia multivorans (strain ATCC 17616 / 249) protein is Sec-independent protein translocase protein TatA.